Here is a 172-residue protein sequence, read N- to C-terminus: Large ribosomal subunit protein uL10 (172 aa).

The protein belongs to the universal ribosomal protein uL10 family. Part of the ribosomal stalk of the 50S ribosomal subunit. The N-terminus interacts with L11 and the large rRNA to form the base of the stalk. The C-terminus forms an elongated spine to which L12 dimers bind in a sequential fashion forming a multimeric L10(L12)X complex.

Functionally, forms part of the ribosomal stalk, playing a central role in the interaction of the ribosome with GTP-bound translation factors. The protein is Large ribosomal subunit protein uL10 of Bartonella bacilliformis (strain ATCC 35685 / KC583 / Herrer 020/F12,63).